Consider the following 470-residue polypeptide: Aromatic amino acid aminotransferase C569.07 (470 aa).

The protein belongs to the class-I pyridoxal-phosphate-dependent aminotransferase family. The cofactor is pyridoxal 5'-phosphate.

It localises to the cytoplasm. The catalysed reaction is an aromatic L-alpha-amino acid + 2-oxoglutarate = an aromatic oxo-acid + L-glutamate. Functionally, has aromatic amino acid transaminase activity. The chain is Aromatic amino acid aminotransferase C569.07 from Schizosaccharomyces pombe (strain 972 / ATCC 24843) (Fission yeast).